Here is a 71-residue protein sequence, read N- to C-terminus: Dermonecrotic toxin LgSicTox-alphaI-Loxn-A (71 aa).

The active site involves His12. Mg(2+) is bound by residues Glu32, Asp34, and Asp48.

Mg(2+) is required as a cofactor. Post-translationally, contains 2 disulfide bonds. As to expression, expressed by the venom gland.

It is found in the secreted. The catalysed reaction is an N-(acyl)-sphingosylphosphocholine = an N-(acyl)-sphingosyl-1,3-cyclic phosphate + choline. It catalyses the reaction an N-(acyl)-sphingosylphosphoethanolamine = an N-(acyl)-sphingosyl-1,3-cyclic phosphate + ethanolamine. It carries out the reaction a 1-acyl-sn-glycero-3-phosphocholine = a 1-acyl-sn-glycero-2,3-cyclic phosphate + choline. The enzyme catalyses a 1-acyl-sn-glycero-3-phosphoethanolamine = a 1-acyl-sn-glycero-2,3-cyclic phosphate + ethanolamine. Catalyzes the hydrolysis of sphingomyelin. May also act on other phosphatidyl esters. Functionally, dermonecrotic toxins cleave the phosphodiester linkage between the phosphate and headgroup of certain phospholipids (sphingolipid and lysolipid substrates), forming an alcohol (often choline) and a cyclic phosphate. This toxin acts on sphingomyelin (SM). It may also act on ceramide phosphoethanolamine (CPE), lysophosphatidylcholine (LPC) and lysophosphatidylethanolamine (LPE), but not on lysophosphatidylserine (LPS), and lysophosphatidylglycerol (LPG). It acts by transphosphatidylation, releasing exclusively cyclic phosphate products as second products. In vivo, induces dermonecrosis, but is not lethal. Induces hemolysis, vascular permeability, edema, inflammatory response, and platelet aggregation. This is Dermonecrotic toxin LgSicTox-alphaI-Loxn-A from Loxosceles gaucho (Spider).